Reading from the N-terminus, the 201-residue chain is LexA repressor (201 aa).

The H-T-H motif DNA-binding region spans 28–48 (LREIGGHLGINGTLGVMKHLD). Active-site for autocatalytic cleavage activity residues include serine 120 and lysine 157.

It belongs to the peptidase S24 family. As to quaternary structure, homodimer.

The enzyme catalyses Hydrolysis of Ala-|-Gly bond in repressor LexA.. In terms of biological role, represses a number of genes involved in the response to DNA damage (SOS response), including recA and lexA. In the presence of single-stranded DNA, RecA interacts with LexA causing an autocatalytic cleavage which disrupts the DNA-binding part of LexA, leading to derepression of the SOS regulon and eventually DNA repair. In Geotalea uraniireducens (strain Rf4) (Geobacter uraniireducens), this protein is LexA repressor.